We begin with the raw amino-acid sequence, 381 residues long: Succinyl-diaminopimelate desuccinylase (381 aa).

Residue His68 participates in Zn(2+) binding. Asp70 is an active-site residue. Asp101 is a Zn(2+) binding site. Residue Glu135 is the Proton acceptor of the active site. Glu136, Glu164, and His350 together coordinate Zn(2+).

It belongs to the peptidase M20A family. DapE subfamily. Homodimer. Requires Zn(2+) as cofactor. The cofactor is Co(2+).

It catalyses the reaction N-succinyl-(2S,6S)-2,6-diaminopimelate + H2O = (2S,6S)-2,6-diaminopimelate + succinate. The protein operates within amino-acid biosynthesis; L-lysine biosynthesis via DAP pathway; LL-2,6-diaminopimelate from (S)-tetrahydrodipicolinate (succinylase route): step 3/3. Catalyzes the hydrolysis of N-succinyl-L,L-diaminopimelic acid (SDAP), forming succinate and LL-2,6-diaminopimelate (DAP), an intermediate involved in the bacterial biosynthesis of lysine and meso-diaminopimelic acid, an essential component of bacterial cell walls. In Neisseria meningitidis serogroup A / serotype 4A (strain DSM 15465 / Z2491), this protein is Succinyl-diaminopimelate desuccinylase.